Here is a 244-residue protein sequence, read N- to C-terminus: Large ribosomal subunit protein uL3 (244 aa).

A disordered region spans residues 215 to 244; it reads KKPPRERRGFAGSSTVDPLKASKRAVAKKK. Residues 235–244 are compositionally biased toward basic residues; that stretch reads ASKRAVAKKK.

The protein belongs to the universal ribosomal protein uL3 family. Part of the 50S ribosomal subunit. Forms a cluster with proteins L14 and L19.

Its function is as follows. One of the primary rRNA binding proteins, it binds directly near the 3'-end of the 23S rRNA, where it nucleates assembly of the 50S subunit. This is Large ribosomal subunit protein uL3 from Koribacter versatilis (strain Ellin345).